The primary structure comprises 276 residues: SF-assemblin (276 aa).

The interval Met1 to Gly31 is nonhelical region. A disordered region spans residues Met1–Glu37. The rod stretch occupies residues Pro32–Ala276. Positions Leu67–Arg145 form a coiled coil.

This sequence belongs to the SF-assemblin family.

Its subcellular location is the cytoplasm. The protein localises to the cytoskeleton. Its function is as follows. Major component of the striated microtubule-associated fibers (SMAFs; system-I-fibers). This Chlamydomonas reinhardtii (Chlamydomonas smithii) protein is SF-assemblin.